The primary structure comprises 251 residues: Cell division protein ZapD (251 aa).

The protein belongs to the ZapD family. As to quaternary structure, interacts with FtsZ.

The protein localises to the cytoplasm. Functionally, cell division factor that enhances FtsZ-ring assembly. Directly interacts with FtsZ and promotes bundling of FtsZ protofilaments, with a reduction in FtsZ GTPase activity. The polypeptide is Cell division protein ZapD (Janthinobacterium sp. (strain Marseille) (Minibacterium massiliensis)).